The primary structure comprises 459 residues: U-box domain-containing protein 75 (459 aa).

The U-box domain occupies 64–138 (AVPAVFICPI…AAWFSRRYTR (75 aa)). ARM repeat units follow at residues 188-229 (QSVT…GVPL) and 231-270 (ADAK…ILME).

As to quaternary structure, interacts with GPA1. In terms of tissue distribution, expressed highly in panicles at flowering time, at moderate levels in vegetative shoot apices, leaf sheaths, leaf blades, and elongating internodes, and at low levels in roots.

It is found in the cell membrane. It catalyses the reaction S-ubiquitinyl-[E2 ubiquitin-conjugating enzyme]-L-cysteine + [acceptor protein]-L-lysine = [E2 ubiquitin-conjugating enzyme]-L-cysteine + N(6)-ubiquitinyl-[acceptor protein]-L-lysine.. Its pathway is protein modification; protein ubiquitination. In terms of biological role, E3 ubiquitin ligase that may function as positive regulator of brassinosteroid (BR) signaling. Possesses E3 ubiquitin ligase in vitro. Acts together with the heterotrimeric G alpha subunit GPA1 at the plasma membrane to mediate a BR signaling pathway that affects plant growth and development. Does not seem to be involved in gibberellin or cytokinin responses. This Oryza sativa subsp. japonica (Rice) protein is U-box domain-containing protein 75.